The following is a 560-amino-acid chain: Secreted RxLR effector protein 142 (560 aa).

A signal peptide spans 1 to 22 (MRRAYFVAIALLVAAGGKTAAG). Disordered stretches follow at residues 48 to 73 (QSQN…ERTP) and 354 to 377 (INRP…LNNQ). Residues 54–72 (ESRDPKDDLKLSAGNEERT) show a composition bias toward basic and acidic residues. Positions 56–71 (RDPKDDLKLSAGNEER) match the RxLR-dEER motif. Positions 361–377 (GPSTNGATTSNGGLNNQ) are enriched in polar residues.

This sequence belongs to the RxLR effector family.

It is found in the secreted. It localises to the host nucleus. Its function is as follows. Secreted effector that completely suppresses the host cell death induced by cell death-inducing proteins. The chain is Secreted RxLR effector protein 142 from Plasmopara viticola (Downy mildew of grapevine).